Here is a 275-residue protein sequence, read N- to C-terminus: Tryptophan synthase alpha chain (275 aa).

Residues Glu-51 and Glu-62 each act as proton acceptor in the active site.

It belongs to the TrpA family. As to quaternary structure, tetramer of two alpha and two beta chains.

It catalyses the reaction (1S,2R)-1-C-(indol-3-yl)glycerol 3-phosphate + L-serine = D-glyceraldehyde 3-phosphate + L-tryptophan + H2O. The protein operates within amino-acid biosynthesis; L-tryptophan biosynthesis; L-tryptophan from chorismate: step 5/5. Its function is as follows. The alpha subunit is responsible for the aldol cleavage of indoleglycerol phosphate to indole and glyceraldehyde 3-phosphate. In Caulobacter sp. (strain K31), this protein is Tryptophan synthase alpha chain.